The chain runs to 84 residues: Cell division topological specificity factor (84 aa).

It belongs to the MinE family.

Prevents the cell division inhibition by proteins MinC and MinD at internal division sites while permitting inhibition at polar sites. This ensures cell division at the proper site by restricting the formation of a division septum at the midpoint of the long axis of the cell. The chain is Cell division topological specificity factor from Rhodopseudomonas palustris (strain BisA53).